Consider the following 408-residue polypeptide: Serine-rich antigen (408 aa).

Repeat copies occupy residues 209 to 214 and 230 to 235. The interval 209 to 235 is 2 X 6 AA repeats of S-V-A-Q-S-E; it reads SVAQSEEHGSDSMSQSYNTCGSVAQSE.

It belongs to the mycobacterial PPE family.

The sequence is that of Serine-rich antigen (sra) from Mycobacterium leprae (strain TN).